Here is a 66-residue protein sequence, read N- to C-terminus: Large ribosomal subunit protein bL33c (66 aa).

It belongs to the bacterial ribosomal protein bL33 family.

It is found in the plastid. The protein localises to the chloroplast. The sequence is that of Large ribosomal subunit protein bL33c from Arabis hirsuta (Hairy rock-cress).